A 311-amino-acid chain; its full sequence is Chemotaxis protein CheV3 (311 aa).

The region spanning 13-164 (EIELVDFRIY…LESILDDLKL (152 aa)) is the CheW-like domain. The region spanning 182–308 (EVLFLDDSKT…FTEEISKILD (127 aa)) is the Response regulatory domain. Asp241 is modified (4-aspartylphosphate).

Its function is as follows. Plays a role in chemotaxis signal transduction system in order to colonize the host stomach. May act as a phosphate sink to control the flow of phosphate to CheAY. The sequence is that of Chemotaxis protein CheV3 from Helicobacter pylori (strain ATCC 700392 / 26695) (Campylobacter pylori).